The chain runs to 53 residues: Small ribosomal subunit protein uS14m (53 aa).

Belongs to the universal ribosomal protein uS14 family.

Its subcellular location is the mitochondrion. This is Small ribosomal subunit protein uS14m (RPS14) from Bigelowiella natans (Pedinomonas minutissima).